Here is a 144-residue protein sequence, read N- to C-terminus: Large ribosomal subunit protein eL27 (144 aa).

One can recognise a KOW domain in the interval I6–H43.

This sequence belongs to the eukaryotic ribosomal protein eL27 family.

The protein is Large ribosomal subunit protein eL27 (rpl27) of Dictyostelium discoideum (Social amoeba).